A 966-amino-acid chain; its full sequence is Aminopeptidase N (966 aa).

Topologically, residues 1 to 8 (MAKGFYIS) are cytoplasmic. The helical; Signal-anchor for type II membrane protein transmembrane segment at 9–32 (KSLGILGILLGVAALCTIVALSVV) threads the bilayer. The cytosolic Ser/Thr-rich junction stretch occupies residues 33-65 (YRQEKNKNTSQSPSMAPLNPTATSSPATTLDQN). The Extracellular portion of the chain corresponds to 33-966 (YRQEKNKNTS…VLAWFTANSA (934 aa)). N40 and N125 each carry an N-linked (GlcNAc...) asparagine glycan. The segment at 40-61 (NTSQSPSMAPLNPTATSSPATT) is disordered. A metalloprotease region spans residues 66 to 966 (LPWNRYRLPK…VLAWFTANSA (901 aa)). Y173 carries the sulfotyrosine modification. 2 N-linked (GlcNAc...) asparagine glycosylation sites follow: N259 and N315. 348–352 (GAMEN) lines the substrate pocket. H384 lines the Zn(2+) pocket. E385 (proton acceptor) is an active-site residue. Residues H388 and E407 each contribute to the Zn(2+) site. Residues Y415 and Y420 each carry the sulfotyrosine modification. 4 N-linked (GlcNAc...) asparagine glycosylation sites follow: N552, N570, N624, and N734. Intrachain disulfides connect C760-C767 and C797-C833. N-linked (GlcNAc...) asparagine glycosylation occurs at N817. Y852 is subject to Phosphotyrosine. Residue Y912 is modified to Sulfotyrosine.

The protein belongs to the peptidase M1 family. Homodimer. Interacts with SLC6A19. Zn(2+) serves as cofactor. Post-translationally, sulfated. N- and O-glycosylated. In terms of processing, may undergo proteolysis and give rise to a soluble form.

Its subcellular location is the cell membrane. It carries out the reaction Release of an N-terminal amino acid, Xaa-|-Yaa- from a peptide, amide or arylamide. Xaa is preferably Ala, but may be most amino acids including Pro (slow action). When a terminal hydrophobic residue is followed by a prolyl residue, the two may be released as an intact Xaa-Pro dipeptide.. Its function is as follows. Broad specificity aminopeptidase which plays a role in the final digestion of peptides generated from hydrolysis of proteins by gastric and pancreatic proteases. Also involved in the processing of various peptides including peptide hormones, such as angiotensin III and IV, neuropeptides, and chemokines. May also be involved the cleavage of peptides bound to major histocompatibility complex class II molecules of antigen presenting cells. May have a role in angiogenesis and promote cholesterol crystallization. May have a role in amino acid transport by acting as binding partner of amino acid transporter SLC6A19 and regulating its activity. This Oryctolagus cuniculus (Rabbit) protein is Aminopeptidase N (ANPEP).